We begin with the raw amino-acid sequence, 213 residues long: MSLKQSFPLLETRGLLIVFEGCDKTGKSTQCKLLFEELKQKNIEVRMINFPNRTTQTGKLIDQYLKGKIYLSDEDIHILFSKNRWEIIDTIKTNILNGITVIIDRYSYSGIAFSVAKGLDFQWCKQTENGLLKPDIIIYLTGQTKNMASRNGYGSEIYERIEIQDKVKKCYEKMIEIPLWNKINADQDVLIIKKQIETIIQKFSLENNKLEYI.

21–28 (GCDKTGKS) is a binding site for ATP.

This sequence belongs to the thymidylate kinase family.

It catalyses the reaction dTMP + ATP = dTDP + ADP. The protein operates within pyrimidine metabolism; dTTP biosynthesis. Catalyzes the conversion of dTMP to dTDP. The polypeptide is Putative thymidylate kinase 251L (Acheta domesticus (House cricket)).